The chain runs to 76 residues: Beta-defensin 121 (76 aa).

Residues 1 to 15 (MKLLLLLLTVTLLLA) form the signal peptide. 3 disulfide bridges follow: C23–C50, C30–C44, and C34–C51.

It belongs to the beta-defensin family.

The protein localises to the secreted. Functionally, has antibacterial activity. This is Beta-defensin 121 (DEFB121) from Pan troglodytes (Chimpanzee).